We begin with the raw amino-acid sequence, 301 residues long: ATP synthase F(0) complex subunit B1, mitochondrial (301 aa).

A mitochondrion-targeting transit peptide spans methionine 1 to glycine 21.

It belongs to the eukaryotic ATPase B chain family. As to quaternary structure, subunit of the F-type ATPase which has 2 components, CF(1) - the catalytic core - and CF(0) - the membrane proton channel.

The protein localises to the mitochondrion. It localises to the mitochondrion inner membrane. Functionally, mitochondrial membrane ATP synthase (F(1)F(0) ATP synthase or Complex V) produces ATP from ADP in the presence of a proton gradient across the membrane which is generated by electron transport complexes of the respiratory chain. F-type ATPases consist of two structural domains, F(1) - containing the extramembraneous catalytic core, and F(0) - containing the membrane proton channel, linked together by a central stalk and a peripheral stalk. During catalysis, ATP synthesis in the catalytic domain of F(1) is coupled via a rotary mechanism of the central stalk subunits to proton translocation. Part of the complex F(0) domain and the peripheric stalk, which acts as a stator to hold the subunits of the catalytic subcomplexes relative to the rotary elements. Plays a role in germline development. This Caenorhabditis elegans protein is ATP synthase F(0) complex subunit B1, mitochondrial.